Consider the following 147-residue polypeptide: Sulfur acceptor protein CsdE (147 aa).

Catalysis depends on Cys61, which acts as the Cysteine persulfide intermediate. Cys61 bears the Cysteine persulfide mark.

Belongs to the SufE family. As to quaternary structure, homodimer. Forms a heterodimer with CsdA. Interacts with CsdA and with TcdA/CsdL.

In terms of biological role, stimulates the cysteine desulfurase activity of CsdA. Contains a cysteine residue (Cys-61) that acts to accept sulfur liberated via the desulfurase activity of CsdA. May be able to transfer sulfur to TcdA/CsdL. Seems to support the function of TcdA in the generation of cyclic threonylcarbamoyladenosine at position 37 (ct(6)A37) in tRNAs that read codons beginning with adenine. Does not appear to participate in Fe/S biogenesis. This chain is Sulfur acceptor protein CsdE (csdE), found in Escherichia coli (strain K12).